Consider the following 90-residue polypeptide: MASKKAGGSTRNGRDSEAKRLGVKAYGNELIPAGSIIVRQRGTKFHAGDNVGMGKDHTLFAKVDGYVEFKTKGALNRKTVSIRPYTGSEE.

A disordered region spans residues 1 to 21 (MASKKAGGSTRNGRDSEAKRL).

The protein belongs to the bacterial ribosomal protein bL27 family.

In Neisseria meningitidis serogroup C (strain 053442), this protein is Large ribosomal subunit protein bL27.